The following is a 237-amino-acid chain: Demethylmenaquinone methyltransferase (237 aa).

Residues Thr-58, Asp-79, and 106 to 107 (NA) contribute to the S-adenosyl-L-methionine site.

The protein belongs to the class I-like SAM-binding methyltransferase superfamily. MenG/UbiE family.

The enzyme catalyses a 2-demethylmenaquinol + S-adenosyl-L-methionine = a menaquinol + S-adenosyl-L-homocysteine + H(+). Its pathway is quinol/quinone metabolism; menaquinone biosynthesis; menaquinol from 1,4-dihydroxy-2-naphthoate: step 2/2. Methyltransferase required for the conversion of demethylmenaquinol (DMKH2) to menaquinol (MKH2). This is Demethylmenaquinone methyltransferase from Listeria monocytogenes serotype 4a (strain HCC23).